A 42-amino-acid polypeptide reads, in one-letter code: Thymosin beta-10 (42 aa).

2 stretches are compositionally biased toward basic and acidic residues: residues 1 to 25 (MADKPDMGEINSFDKAKLKKTETQE) and 33 to 42 (ETIEQEKQAK). Residues 1–42 (MADKPDMGEINSFDKAKLKKTETQEKNTLPTKETIEQEKQAK) are disordered. At Ala2 the chain carries N-acetylalanine. Lys4 carries the N6-acetyllysine modification. Phosphoserine is present on Ser12. Lys15 carries the N6-acetyllysine modification. 3 positions are modified to phosphothreonine: Thr21, Thr23, and Thr34. Lys39 bears the N6-acetyllysine mark.

It belongs to the thymosin beta family.

The protein localises to the cytoplasm. Its subcellular location is the cytoskeleton. Plays an important role in the organization of the cytoskeleton. Binds to and sequesters actin monomers (G actin) and therefore inhibits actin polymerization. In Sus scrofa (Pig), this protein is Thymosin beta-10 (TMSB10).